The chain runs to 241 residues: Small ribosomal subunit protein uS3 (241 aa).

The KH type-2 domain maps to 39–109 (VRNYVNKNLS…PIRINVVEVA (71 aa)). The disordered stretch occupies residues 213–241 (ADEQPTNREPQQRRRQQQRRRQQFEDRSE).

Belongs to the universal ribosomal protein uS3 family. In terms of assembly, part of the 30S ribosomal subunit. Forms a tight complex with proteins S10 and S14.

Binds the lower part of the 30S subunit head. Binds mRNA in the 70S ribosome, positioning it for translation. This is Small ribosomal subunit protein uS3 from Acaryochloris marina (strain MBIC 11017).